A 178-amino-acid chain; its full sequence is Caveolin-1 (178 aa).

Ser-2 bears the N-acetylserine mark. Position 2 is a phosphoserine (Ser-2). The tract at residues 2-94 (SGGKYVDAEG…WKASFTTFTV (93 aa)) is required for homooligomerization. Over 2 to 104 (SGGKYVDAEG…TKYWFYRLLS (103 aa)) the chain is Cytoplasmic. Lys-5 is modified (N6-acetyllysine; alternate). Residue Lys-5 forms a Glycyl lysine isopeptide (Lys-Gly) (interchain with G-Cter in ubiquitin); alternate linkage. Tyr-6 is modified (phosphotyrosine). Tyr-14 carries the phosphotyrosine; by ABL1 modification. At Tyr-25 the chain carries Phosphotyrosine. Residues Lys-26, Lys-30, Lys-39, Lys-47, and Lys-57 each participate in a glycyl lysine isopeptide (Lys-Gly) (interchain with G-Cter in ubiquitin) cross-link. The interaction with CAVIN3 stretch occupies residues 82–94 (DGIWKASFTTFTV). An intramembrane region (helical) is located at residues 105–125 (ALLGIPLALLWGIYFAILSFL). The Cytoplasmic portion of the chain corresponds to 126–178 (HIWAVVPCIRSYLIEIQCISRVYSICIHTFCDPLFEAIGKVFSNIRATVQKEI). The tract at residues 131–142 (VPCIRSYLIEIQ) is interacts with SPRY1, SPRY2, SPRY3 and SPRY4. S-palmitoyl cysteine attachment occurs at residues Cys-133, Cys-143, and Cys-156. The segment at 149–160 (SICIHTFCDPLF) is interacts with SPRY1, SPRY2, and SPRY4. Residues 167–178 (FSNIRATVQKEI) are interacts with SPRY1, SPRY2, SPRY3 and SPRY4.

Belongs to the caveolin family. Homooligomer. Interacts with GLIPR2. Interacts with NOSTRIN. Interacts with SNAP25 and STX1A. Interacts (via the N-terminus) with DPP4; the interaction is direct. Interacts with CTNNB1, CDH1 and JUP. Interacts with PACSIN2; this interaction induces membrane tubulation. Interacts with SLC7A9. Interacts with BMX and BTK. Interacts with TGFBR1. Interacts with CAVIN3 (via leucine-zipper domain) in a cholesterol-sensitive manner. Interacts with CAVIN1. Interacts with EHD2 in a cholesterol-dependent manner. Forms a ternary complex with UBXN6 and VCP; mediates CAV1 targeting to lysosomes for degradation. Interacts with ABCG1; this interaction regulates ABCG1-mediated cholesterol efflux. Interacts with NEU3; this interaction enhances NEU3 sialidase activity within caveola. Interacts (via C-terminus) with SPRY1, SPRY2 (via C-terminus), SPRY3, and SPRY4. Interacts with IGFBP5; this interaction allows trafficking of IGFBP5 from the plasma membrane to the nucleus. Post-translationally, phosphorylated at Tyr-14 by ABL1 in response to oxidative stress. Ubiquitinated. Undergo monoubiquitination and multi- and/or polyubiquitination. Monoubiquitination of N-terminal lysines promotes integration in a ternary complex with UBXN6 and VCP which promotes oligomeric CAV1 targeting to lysosomes for degradation. Ubiquitinated by ZNRF1; leading to degradation and modulation of the TLR4-mediated immune response.

The protein resides in the golgi apparatus membrane. Its subcellular location is the cell membrane. It localises to the membrane. It is found in the caveola. The protein localises to the membrane raft. In terms of biological role, may act as a scaffolding protein within caveolar membranes. Forms a stable heterooligomeric complex with CAV2 that targets to lipid rafts and drives caveolae formation. Mediates the recruitment of CAVIN proteins (CAVIN1/2/3/4) to the caveolae. Interacts directly with G-protein alpha subunits and can functionally regulate their activity. Involved in the costimulatory signal essential for T-cell receptor (TCR)-mediated T-cell activation. Its binding to DPP4 induces T-cell proliferation and NF-kappa-B activation in a T-cell receptor/CD3-dependent manner. Recruits CTNNB1 to caveolar membranes and may regulate CTNNB1-mediated signaling through the Wnt pathway. Negatively regulates TGFB1-mediated activation of SMAD2/3 by mediating the internalization of TGFBR1 from membrane rafts leading to its subsequent degradation. Binds 20(S)-hydroxycholesterol (20(S)-OHC). In Ornithorhynchus anatinus (Duckbill platypus), this protein is Caveolin-1 (CAV1).